We begin with the raw amino-acid sequence, 65 residues long: Conotoxin Cal16.1 (65 aa).

Positions 1–19 (MRCLSIFVLLVLLVSFAVA) are cleaved as a signal peptide. Positions 20–48 (ELDVEGEIVKQLLTRGTLKDADFWKRLEM) are excised as a propeptide. Glutamine 49 is modified (pyrrolidone carboxylic acid). 2 disulfide bridges follow: cysteine 51–cysteine 60 and cysteine 53–cysteine 61. Glutamate 63 is subject to Glutamic acid 1-amide.

In terms of tissue distribution, expressed by the venom duct.

The protein localises to the secreted. Functionally, probable neurotoxin with unknown target. Possibly targets ion channels. This Californiconus californicus (California cone) protein is Conotoxin Cal16.1.